The primary structure comprises 218 residues: 3-dehydroquinate dehydratase (218 aa).

Residues 29 to 31 and R56 each bind 3-dehydroquinate; that span reads EFR. Catalysis depends on H116, which acts as the Proton donor/acceptor. Residue K142 is the Schiff-base intermediate with substrate of the active site. 3-dehydroquinate-binding residues include R180, S200, and Q204.

Belongs to the type-I 3-dehydroquinase family. In terms of assembly, homodimer.

The enzyme catalyses 3-dehydroquinate = 3-dehydroshikimate + H2O. Its pathway is metabolic intermediate biosynthesis; chorismate biosynthesis; chorismate from D-erythrose 4-phosphate and phosphoenolpyruvate: step 3/7. Its function is as follows. Involved in the third step of the chorismate pathway, which leads to the biosynthesis of aromatic amino acids. Catalyzes the cis-dehydration of 3-dehydroquinate (DHQ) and introduces the first double bond of the aromatic ring to yield 3-dehydroshikimate. This Methanococcus maripaludis (strain C7 / ATCC BAA-1331) protein is 3-dehydroquinate dehydratase.